The following is an 88-amino-acid chain: Small ribosomal subunit protein bS20 (88 aa).

The protein belongs to the bacterial ribosomal protein bS20 family.

Functionally, binds directly to 16S ribosomal RNA. This Nitrobacter winogradskyi (strain ATCC 25391 / DSM 10237 / CIP 104748 / NCIMB 11846 / Nb-255) protein is Small ribosomal subunit protein bS20.